The following is a 201-amino-acid chain: Histone-like protein HC2 (201 aa).

The interval 1–69 is disordered; that stretch reads MLGVQKKCST…VAKKATAKKA (69 aa). 2 stretches are compositionally biased toward basic residues: residues 8–50 and 59–69; these read CSTR…KTVA and PVAKKATAKKA.

This sequence belongs to the histone H1/H5 family. HCT subfamily.

In terms of biological role, might have a role in establishing the nucleoid structure of elementary bodies. In Chlamydia trachomatis serovar D (strain ATCC VR-885 / DSM 19411 / UW-3/Cx), this protein is Histone-like protein HC2 (hctB).